Reading from the N-terminus, the 381-residue chain is 3-hydroxyisobutyryl-CoA hydrolase, mitochondrial (381 aa).

The N-terminal 25 residues, 1–25, are a transit peptide targeting the mitochondrion; sequence MDRLLTISNHIGKNIRQFSTSTEEV. Substrate-binding residues include Glu-116, Gly-141, Glu-164, and Asp-172.

It belongs to the enoyl-CoA hydratase/isomerase family.

It localises to the mitochondrion. It carries out the reaction 3-hydroxy-2-methylpropanoyl-CoA + H2O = 3-hydroxy-2-methylpropanoate + CoA + H(+). Its pathway is amino-acid degradation; L-valine degradation. Hydrolyzes 3-hydroxyisobutyryl-CoA (HIBYL-CoA), a saline catabolite. In Dictyostelium discoideum (Social amoeba), this protein is 3-hydroxyisobutyryl-CoA hydrolase, mitochondrial (hibch).